A 299-amino-acid polypeptide reads, in one-letter code: Formin-like protein 12 (299 aa).

Residues 1–295 (MASNCEKMLS…LEKRKMNIKQ (295 aa)) form the FH2 domain.

Belongs to the formin-like family. Class-II subfamily.

This Arabidopsis thaliana (Mouse-ear cress) protein is Formin-like protein 12 (FH12).